Reading from the N-terminus, the 218-residue chain is N-(5'-phosphoribosyl)anthranilate isomerase (218 aa).

This sequence belongs to the TrpF family.

It catalyses the reaction N-(5-phospho-beta-D-ribosyl)anthranilate = 1-(2-carboxyphenylamino)-1-deoxy-D-ribulose 5-phosphate. It functions in the pathway amino-acid biosynthesis; L-tryptophan biosynthesis; L-tryptophan from chorismate: step 3/5. This is N-(5'-phosphoribosyl)anthranilate isomerase from Lachnoclostridium phytofermentans (strain ATCC 700394 / DSM 18823 / ISDg) (Clostridium phytofermentans).